The sequence spans 796 residues: Transcription factor kayak (796 aa).

Disordered stretches follow at residues 109-132 (AYQQQQSKQSYNNNNNSNSNSNTS), 315-341 (VVNNNNNNNNNNNNNSSNNNNNNSNTV), 374-429 (FNCG…GSNG), and 442-490 (VGSA…RNKL). The segment covering 402-429 (TTDTSSAATDSTSYQNGGHMFGNNGSNG) has biased composition (low complexity). A compositionally biased stretch (polar residues) spans 447-457 (RGTSSTSNNAT). Positions 478-541 (EEKRRVRRER…HQLNFVLEAH (64 aa)) constitute a bZIP domain. The basic motif stretch occupies residues 480–499 (KRRVRRERNKLAAARCRKRR). The tract at residues 506 to 534 (LSEEVDGLLKKNEDLKKEIEILTNTRHQL) is leucine-zipper. The interval 569 to 601 (SSGSNGSHHHNSNSNNSNNNNSNNNNNSNSNDS) is disordered. Ser-621 carries the phosphoserine modification. Disordered stretches follow at residues 642–661 (PHDAGLDSSSSLDQDGPPAA) and 774–796 (SSQNKHPLELPTPTSEPSKLVSL).

This sequence belongs to the bZIP family. Fos subfamily. In terms of assembly, homodimer. Heterodimer with Jra. The kay-Jra heterodimer binds more stably to the AP-1 site than either of the two proteins alone.

The protein resides in the nucleus. Functionally, developmentally regulated transcription factor AP-1 binds and recognizes the enhancer DNA sequence: 5'-TGA[CG]TCA-3'. May play a role in the function or determination of a particular subset of cells in the developing embryo. It is able to carry out its function either independently of or in conjunction with Jra. The chain is Transcription factor kayak from Drosophila grimshawi (Hawaiian fruit fly).